Consider the following 100-residue polypeptide: Small ribosomal subunit protein uS14c (100 aa).

The interval 1–31 (MAKKSLIQREKKRQKLEQKYHSIRRSSKKEI) is disordered.

This sequence belongs to the universal ribosomal protein uS14 family. Part of the 30S ribosomal subunit.

The protein localises to the plastid. Its subcellular location is the chloroplast. Functionally, binds 16S rRNA, required for the assembly of 30S particles. The chain is Small ribosomal subunit protein uS14c from Atropa belladonna (Belladonna).